Here is a 401-residue protein sequence, read N- to C-terminus: uncharacterized protein (401 aa).

7 consecutive transmembrane segments (helical) span residues 44–64, 69–89, 99–119, 130–150, 201–221, 246–266, and 286–306; these read LKYT…LVFI, LYSF…FVLL, LVFN…LIIF, ILST…SIIP, FIYA…LYIL, ILFY…SFVA, and LFFS…GTVV.

The protein localises to the cell membrane. This is an uncharacterized protein from Mycoplasma pneumoniae (strain ATCC 29342 / M129 / Subtype 1) (Mycoplasmoides pneumoniae).